Reading from the N-terminus, the 200-residue chain is Small ribosomal subunit protein uS4 (200 aa).

Over residues 1 to 13 (MARYRGPKQKIAR) the composition is skewed to basic residues. The tract at residues 1–44 (MARYRGPKQKIARRFKEPIFGPSKALERKPYPPGQHGQSRRRRE) is disordered. In terms of domain architecture, S4 RNA-binding spans 92–154 (ARLDNTVFRM…SQDLEVIQTN (63 aa)).

It belongs to the universal ribosomal protein uS4 family. Part of the 30S ribosomal subunit. Contacts protein S5. The interaction surface between S4 and S5 is involved in control of translational fidelity.

Functionally, one of the primary rRNA binding proteins, it binds directly to 16S rRNA where it nucleates assembly of the body of the 30S subunit. In terms of biological role, with S5 and S12 plays an important role in translational accuracy. The protein is Small ribosomal subunit protein uS4 of Salinibacter ruber (strain DSM 13855 / M31).